The primary structure comprises 153 residues: 6,7-dimethyl-8-ribityllumazine synthase (153 aa).

Residues F22, 56 to 58, and 80 to 82 each bind 5-amino-6-(D-ribitylamino)uracil; these read AFE and TVI. 85–86 contributes to the (2S)-2-hydroxy-3-oxobutyl phosphate binding site; sequence AT. The active-site Proton donor is H88. F113 serves as a coordination point for 5-amino-6-(D-ribitylamino)uracil. R127 contacts (2S)-2-hydroxy-3-oxobutyl phosphate.

This sequence belongs to the DMRL synthase family.

It catalyses the reaction (2S)-2-hydroxy-3-oxobutyl phosphate + 5-amino-6-(D-ribitylamino)uracil = 6,7-dimethyl-8-(1-D-ribityl)lumazine + phosphate + 2 H2O + H(+). It participates in cofactor biosynthesis; riboflavin biosynthesis; riboflavin from 2-hydroxy-3-oxobutyl phosphate and 5-amino-6-(D-ribitylamino)uracil: step 1/2. In terms of biological role, catalyzes the formation of 6,7-dimethyl-8-ribityllumazine by condensation of 5-amino-6-(D-ribitylamino)uracil with 3,4-dihydroxy-2-butanone 4-phosphate. This is the penultimate step in the biosynthesis of riboflavin. This chain is 6,7-dimethyl-8-ribityllumazine synthase, found in Clostridium perfringens (strain ATCC 13124 / DSM 756 / JCM 1290 / NCIMB 6125 / NCTC 8237 / Type A).